A 215-amino-acid chain; its full sequence is Glutathione S-transferase F9 (215 aa).

Residues 2–81 (VLKVYGPHFA…YVAEKYRSQG (80 aa)) form the GST N-terminal domain. Residue 11–12 (AS) coordinates glutathione. At serine 12 the chain carries Phosphoserine. Methionine 35 is subject to Methionine sulfoxide. Residues 39–40 (HK), 52–53 (TV), and 65–66 (ES) each bind glutathione. In terms of domain architecture, GST C-terminal spans 88–215 (TVEDRGQVEQ…ETVAKYSFPA (128 aa)). Methionine sulfoxide occurs at positions 118, 123, and 184.

The protein belongs to the GST superfamily. Phi family. In terms of processing, oxidated at Met-35, Met-118, Met-123 and Met-184 in oxidative stress conditions (e.g. hydrogen peroxide H(2)O(2)).

Its subcellular location is the cytoplasm. The protein localises to the cytosol. The catalysed reaction is RX + glutathione = an S-substituted glutathione + a halide anion + H(+). Its activity is regulated as follows. Redox-regulated enzyme; in oxidative stress conditions methionine oxidation ensure a thermodynamic and structural compensatory mechanism to guarantee H(2)O(2) peroxidase activity despite transferase activity inhibition. Its function is as follows. In vitro, possesses glutathione S-transferase activity toward 1-chloro-2,4-dinitrobenzene (CDNB) and benzyl isothiocyanate (BITC), and glutathione peroxidase activity toward cumene hydroperoxide and linoleic acid-13-hydroperoxide. May be involved in the conjugation of reduced glutathione to a wide number of exogenous and endogenous hydrophobic electrophiles and have a detoxification role against certain herbicides. The sequence is that of Glutathione S-transferase F9 from Arabidopsis thaliana (Mouse-ear cress).